The chain runs to 215 residues: Ras-like GTP-binding protein RHO1 (215 aa).

Positions 30, 31, 32, 33, 34, and 35 each coordinate GTP. A Mg(2+)-binding site is contributed by T34. 2 consecutive short sequence motifs (switch) follow at residues 43-54 and 74-93; these read GEIPTAYVPTVF and DTAGQEEYDRLRPLSYADSD. Mg(2+) is bound at residue T52. GTP is bound by residues D135 and S166. The interval 194–215 is disordered; that stretch reads VTTQAKSQESTQQKKKSKCLLQ. Low complexity predominate over residues 195–204; sequence TTQAKSQEST. The segment covering 206-215 has biased composition (basic residues); sequence QKKKSKCLLQ. C212 bears the Cysteine methyl ester mark. C212 is lipidated: S-geranylgeranyl cysteine. The propeptide at 213–215 is removed in mature form; that stretch reads LLQ.

Belongs to the small GTPase superfamily. Rho family. As to quaternary structure, interacts (GTP-bound form) with formin1 (via GBD/FH3 domain); the interaction activates formin1. Interacts (GTP-bound form) with profilin1. Interacts (GDP-bound form and when prenylated) with RhoGDI. The cofactor is Mg(2+).

It localises to the cell membrane. It is found in the cytoplasm. The protein resides in the cytoskeleton. Its subcellular location is the cell projection. The protein localises to the phagocytic cup. It localises to the cytoplasmic vesicle. It is found in the phagosome. It carries out the reaction GTP + H2O = GDP + phosphate + H(+). Regulated by guanine nucleotide exchange factors (GEFs) which promote the exchange of bound GDP for free GTP, GTPase activating proteins (GAPs) which increase the GTP hydrolysis activity and GDP dissociation inhibitors which inhibit the dissociation of the nucleotide from the GTPase. In terms of biological role, small GTPase which cycles between active GTP-bound and inactive GDP-bound states. Involved in actin cytoskeleton remodeling. Regulates phagocytosis by modulating actin cytoskeleton dynamics through the recruitment of formin1 and profilin1 to the phagocytosis nucleation site. This Entamoeba histolytica (strain ATCC 30459 / HM-1:IMSS / ABRM) protein is Ras-like GTP-binding protein RHO1.